The primary structure comprises 117 residues: Ribosome-binding factor A (117 aa).

This sequence belongs to the RbfA family. Monomer. Binds 30S ribosomal subunits, but not 50S ribosomal subunits or 70S ribosomes.

It localises to the cytoplasm. Functionally, one of several proteins that assist in the late maturation steps of the functional core of the 30S ribosomal subunit. Associates with free 30S ribosomal subunits (but not with 30S subunits that are part of 70S ribosomes or polysomes). Required for efficient processing of 16S rRNA. May interact with the 5'-terminal helix region of 16S rRNA. This is Ribosome-binding factor A from Bacillus licheniformis (strain ATCC 14580 / DSM 13 / JCM 2505 / CCUG 7422 / NBRC 12200 / NCIMB 9375 / NCTC 10341 / NRRL NRS-1264 / Gibson 46).